Reading from the N-terminus, the 109-residue chain is Nucleoid-associated protein NT01EI_1109 (109 aa).

The interval lysine 89–phenylalanine 109 is disordered.

Belongs to the YbaB/EbfC family. Homodimer.

The protein resides in the cytoplasm. Its subcellular location is the nucleoid. Its function is as follows. Binds to DNA and alters its conformation. May be involved in regulation of gene expression, nucleoid organization and DNA protection. The polypeptide is Nucleoid-associated protein NT01EI_1109 (Edwardsiella ictaluri (strain 93-146)).